A 315-amino-acid chain; its full sequence is 4-hydroxy-3-methylbut-2-enyl diphosphate reductase (315 aa).

Cys-12 serves as a coordination point for [4Fe-4S] cluster. Residues His-40 and His-74 each contribute to the (2E)-4-hydroxy-3-methylbut-2-enyl diphosphate site. Dimethylallyl diphosphate contacts are provided by His-40 and His-74. Isopentenyl diphosphate is bound by residues His-40 and His-74. Cys-96 contacts [4Fe-4S] cluster. His-124 serves as a coordination point for (2E)-4-hydroxy-3-methylbut-2-enyl diphosphate. Dimethylallyl diphosphate is bound at residue His-124. His-124 provides a ligand contact to isopentenyl diphosphate. Catalysis depends on Glu-126, which acts as the Proton donor. Residue Thr-167 coordinates (2E)-4-hydroxy-3-methylbut-2-enyl diphosphate. Residue Cys-213 participates in [4Fe-4S] cluster binding. The (2E)-4-hydroxy-3-methylbut-2-enyl diphosphate site is built by Ser-241, Ser-242, Asn-243, and Ser-290. Positions 241, 242, 243, and 290 each coordinate dimethylallyl diphosphate. Isopentenyl diphosphate is bound by residues Ser-241, Ser-242, Asn-243, and Ser-290.

Belongs to the IspH family. [4Fe-4S] cluster is required as a cofactor.

It carries out the reaction isopentenyl diphosphate + 2 oxidized [2Fe-2S]-[ferredoxin] + H2O = (2E)-4-hydroxy-3-methylbut-2-enyl diphosphate + 2 reduced [2Fe-2S]-[ferredoxin] + 2 H(+). It catalyses the reaction dimethylallyl diphosphate + 2 oxidized [2Fe-2S]-[ferredoxin] + H2O = (2E)-4-hydroxy-3-methylbut-2-enyl diphosphate + 2 reduced [2Fe-2S]-[ferredoxin] + 2 H(+). It functions in the pathway isoprenoid biosynthesis; dimethylallyl diphosphate biosynthesis; dimethylallyl diphosphate from (2E)-4-hydroxy-3-methylbutenyl diphosphate: step 1/1. The protein operates within isoprenoid biosynthesis; isopentenyl diphosphate biosynthesis via DXP pathway; isopentenyl diphosphate from 1-deoxy-D-xylulose 5-phosphate: step 6/6. Functionally, catalyzes the conversion of 1-hydroxy-2-methyl-2-(E)-butenyl 4-diphosphate (HMBPP) into a mixture of isopentenyl diphosphate (IPP) and dimethylallyl diphosphate (DMAPP). Acts in the terminal step of the DOXP/MEP pathway for isoprenoid precursor biosynthesis. The sequence is that of 4-hydroxy-3-methylbut-2-enyl diphosphate reductase from Chloroherpeton thalassium (strain ATCC 35110 / GB-78).